Consider the following 291-residue polypeptide: Tyrosine recombinase XerD (291 aa).

Residues 1–82 enclose the Core-binding (CB) domain; that stretch reads MEEGLIDRLL…ACKRLYIWME (82 aa). One can recognise a Tyr recombinase domain in the interval 103 to 285; sequence NIPTLITEQQ…ANVWLQGVVK (183 aa). Residues R143, K167, H237, R240, and H263 contribute to the active site. Y272 functions as the O-(3'-phospho-DNA)-tyrosine intermediate in the catalytic mechanism.

This sequence belongs to the 'phage' integrase family. XerD subfamily. In terms of assembly, forms a cyclic heterotetrameric complex composed of two molecules of XerC and two molecules of XerD.

Its subcellular location is the cytoplasm. Its function is as follows. Site-specific tyrosine recombinase, which acts by catalyzing the cutting and rejoining of the recombining DNA molecules. The XerC-XerD complex is essential to convert dimers of the bacterial chromosome into monomers to permit their segregation at cell division. It also contributes to the segregational stability of plasmids. The chain is Tyrosine recombinase XerD from Neisseria meningitidis serogroup B (strain ATCC BAA-335 / MC58).